Consider the following 261-residue polypeptide: Proliferating cell nuclear antigen (261 aa).

Lys14, Lys77, and Lys80 each carry N6-acetyllysine. The DNA-binding element occupies 61–80 (RCDRNLAMGVNLTSMSKILK). Cys135 and Cys162 are disulfide-bonded. A Glycyl lysine isopeptide (Lys-Gly) (interchain with G-Cter in SUMO2); alternate cross-link involves residue Lys164. Residue Lys164 forms a Glycyl lysine isopeptide (Lys-Gly) (interchain with G-Cter in ubiquitin); alternate linkage. Tyr211 carries the post-translational modification Phosphotyrosine; by EGFR. Lys248 bears the N6-acetyllysine mark. A Glycyl lysine isopeptide (Lys-Gly) (interchain with G-Cter in SUMO2) cross-link involves residue Lys254.

This sequence belongs to the PCNA family. As to quaternary structure, homotrimer. Interacts with p300/EP300; the interaction occurs on chromatin in UV-irradiated damaged cells. Interacts with CREBBP (via transactivation domain and C-terminus); the interaction occurs on chromatin in UV-irradiated damaged cells. Directly interacts with POLD1, POLD3 and POLD4 subunits of the DNA polymerase delta complex, POLD3 being the major interacting partner; the interaction with POLD3 is inhibited by CDKN1A/p21(CIP1). Forms a complex with activator 1 heteropentamer in the presence of ATP. Interacts with EXO1, POLH, POLK, DNMT1, ERCC5, FEN1, CDC6 and POLDIP2. Interacts with POLB. Interacts with APEX2; this interaction is triggered by reactive oxygen species and increased by misincorporation of uracil in nuclear DNA. Forms a ternary complex with DNTTIP2 and core histone. Interacts with KCTD10 and PPP1R15A. Interacts with SMARCA5/SNF2H. Interacts with BAZ1B/WSTF; the interaction is direct and is required for BAZ1B/WSTF binding to replication foci during S phase. Interacts with HLTF and SHPRH. Interacts with NUDT15; this interaction is disrupted in response to UV irradiation and acetylation. Interacts with CDKN1A/p21(CIP1) and CDT1; interacts via their PIP-box which also recruits the DCX(DTL) complex. The interaction with CDKN1A inhibits POLD3 binding. Interacts with DDX11. Interacts with EGFR; positively regulates PCNA. Interacts with PARPBP. Interacts (when ubiquitinated) with SPRTN; leading to enhance RAD18-mediated PCNA ubiquitination. Interacts (when polyubiquitinated) with ZRANB3. Interacts with SMARCAD1. Interacts with CDKN1C. Interacts with PCLAF (via PIP-box). Interacts with RTEL1 (via PIP-box); the interaction is direct and essential for the suppression of telomere fragility. Interacts with FAM111A (via PIP-box); the interaction is direct and required for PCNA loading on chromatin binding. Interacts with LIG1. Interacts with SETMAR. Interacts with ANKRD17. Interacts with FBXO18/FBH1 (via PIP-box); the interaction recruits the DCX(DTL) complex and promotes ubiquitination and degradation of FBXO18/FBH1. Interacts with POLN. Interacts with SDE2 (via PIP-box); the interaction is direct and prevents ultraviolet light induced monoubiquitination. Component of the replisome complex composed of at least DONSON, MCM2, MCM7, PCNA and TICRR; interaction at least with PCNA occurs during DNA replication. Interacts with MAPK15; the interaction is chromatin binding dependent and prevents MDM2-mediated PCNA destruction by inhibiting the association of PCNA with MDM2. Interacts with PARP10 (via PIP-box). Interacts with DDI2. Interacts with HMCES (via PIP-box). Interacts with TRAIP (via PIP-box). Interacts with UHRF2. Interacts with ALKBH2; this interaction is enhanced during the S-phase of the cell cycle. Interacts with ATAD5; the interaction promotes USP1-mediated PCNA deubiquitination. Interacts (when phosphorylated) with GRB2. Interacts with nuclear UNG; this interaction mediates UNG recruitment to S-phase replication foci. Interacts with ERCC6L2 (via an atypical PIP-box); this interaction facilitates cenrtomeric localization of ERCC6L2. Phosphorylated. Phosphorylation at Tyr-211 by EGFR stabilizes chromatin-associated PCNA. In terms of processing, acetylated by CREBBP and p300/EP300; preferentially acetylated by CREBBP on Lys-80, Lys-13 and Lys-14 and on Lys-77 by p300/EP300 upon loading on chromatin in response to UV irradiation. Lysine acetylation disrupts association with chromatin, hence promoting PCNA ubiquitination and proteasomal degradation in response to UV damage in a CREBBP- and EP300-dependent manner. Acetylation disrupts interaction with NUDT15 and promotes degradation. Post-translationally, ubiquitinated. Following DNA damage, can be either monoubiquitinated to stimulate direct bypass of DNA lesions by specialized DNA polymerases or polyubiquitinated to promote recombination-dependent DNA synthesis across DNA lesions by template switching mechanisms. Following induction of replication stress, monoubiquitinated by the UBE2B-RAD18 complex on Lys-164, leading to recruit translesion (TLS) polymerases, which are able to synthesize across DNA lesions in a potentially error-prone manner. An error-free pathway also exists and requires non-canonical polyubiquitination on Lys-164 through 'Lys-63' linkage of ubiquitin moieties by the E2 complex UBE2N-UBE2V2 and the E3 ligases, HLTF, RNF8 and SHPRH. This error-free pathway, also known as template switching, employs recombination mechanisms to synthesize across the lesion, using as a template the undamaged, newly synthesized strand of the sister chromatid. Monoubiquitination at Lys-164 also takes place in undamaged proliferating cells, and is mediated by the DCX(DTL) complex, leading to enhance PCNA-dependent translesion DNA synthesis. Sumoylated during S phase. Methylated on glutamate residues by ARMT1.

Its subcellular location is the nucleus. Its function is as follows. Auxiliary protein of DNA polymerase delta and epsilon, is involved in the control of eukaryotic DNA replication by increasing the polymerase's processibility during elongation of the leading strand. Induces a robust stimulatory effect on the 3'-5' exonuclease and 3'-phosphodiesterase, but not apurinic-apyrimidinic (AP) endonuclease, APEX2 activities. Has to be loaded onto DNA in order to be able to stimulate APEX2. Plays a key role in DNA damage response (DDR) by being conveniently positioned at the replication fork to coordinate DNA replication with DNA repair and DNA damage tolerance pathways. Acts as a loading platform to recruit DDR proteins that allow completion of DNA replication after DNA damage and promote postreplication repair: Monoubiquitinated PCNA leads to recruitment of translesion (TLS) polymerases, while 'Lys-63'-linked polyubiquitination of PCNA is involved in error-free pathway and employs recombination mechanisms to synthesize across the lesion. The sequence is that of Proliferating cell nuclear antigen (PCNA) from Bos taurus (Bovine).